The chain runs to 425 residues: Riboflavin biosynthesis protein RibBA (425 aa).

The interval 1–204 is DHBP synthase; that stretch reads MTRLDSVERA…IADLIEWRRK (204 aa). D-ribulose 5-phosphate contacts are provided by residues 28 to 29, D33, 141 to 145, and E165; these read RE and RPGHT. E29 lines the Mg(2+) pocket. Residue H144 coordinates Mg(2+). Residues 205–425 form a GTP cyclohydrolase II region; it reads HEKHIERVAE…HLPGEFGGAL (221 aa). Residue 259-263 coordinates GTP; it reads RVHSE. 3 residues coordinate Zn(2+): C264, C275, and C277. GTP is bound by residues Q280, 303-305, and T325; that span reads EGR. The active-site Proton acceptor; for GTP cyclohydrolase activity is D337. Catalysis depends on R339, which acts as the Nucleophile; for GTP cyclohydrolase activity. T360 and K365 together coordinate GTP.

It in the N-terminal section; belongs to the DHBP synthase family. This sequence in the C-terminal section; belongs to the GTP cyclohydrolase II family. Mg(2+) serves as cofactor. It depends on Mn(2+) as a cofactor. Zn(2+) is required as a cofactor.

The catalysed reaction is D-ribulose 5-phosphate = (2S)-2-hydroxy-3-oxobutyl phosphate + formate + H(+). It catalyses the reaction GTP + 4 H2O = 2,5-diamino-6-hydroxy-4-(5-phosphoribosylamino)-pyrimidine + formate + 2 phosphate + 3 H(+). The protein operates within cofactor biosynthesis; riboflavin biosynthesis; 2-hydroxy-3-oxobutyl phosphate from D-ribulose 5-phosphate: step 1/1. It functions in the pathway cofactor biosynthesis; riboflavin biosynthesis; 5-amino-6-(D-ribitylamino)uracil from GTP: step 1/4. Its function is as follows. Catalyzes the conversion of D-ribulose 5-phosphate to formate and 3,4-dihydroxy-2-butanone 4-phosphate. In terms of biological role, catalyzes the conversion of GTP to 2,5-diamino-6-ribosylamino-4(3H)-pyrimidinone 5'-phosphate (DARP), formate and pyrophosphate. The sequence is that of Riboflavin biosynthesis protein RibBA from Mycobacterium ulcerans (strain Agy99).